A 247-amino-acid polypeptide reads, in one-letter code: Uridylate kinase (247 aa).

Lys-11 to Gly-14 serves as a coordination point for ATP. An involved in allosteric activation by GTP region spans residues Gly-19 to Gly-24. Gly-53 lines the UMP pocket. ATP-binding residues include Gly-54 and Arg-58. Residues Asp-73 and Thr-134–Thr-141 contribute to the UMP site. ATP-binding residues include Thr-161, Gln-162, Tyr-167, and Asp-170.

Belongs to the UMP kinase family. As to quaternary structure, homohexamer.

It is found in the cytoplasm. It catalyses the reaction UMP + ATP = UDP + ADP. Its pathway is pyrimidine metabolism; CTP biosynthesis via de novo pathway; UDP from UMP (UMPK route): step 1/1. With respect to regulation, allosterically activated by GTP. Inhibited by UTP. In terms of biological role, catalyzes the reversible phosphorylation of UMP to UDP. This is Uridylate kinase from Chelativorans sp. (strain BNC1).